Consider the following 364-residue polypeptide: Putative serine/threonine-protein phosphatase C06A1.3 (364 aa).

The segment at 1 to 24 (MSTDGNNNKKGSKEGPKSSEISKF) is disordered. Positions 11 to 24 (GSKEGPKSSEISKF) are enriched in basic and acidic residues. 4 residues coordinate Mn(2+): aspartate 93, histidine 95, aspartate 121, and asparagine 153. The active-site Proton donor is histidine 154. Histidine 202 and histidine 277 together coordinate Mn(2+).

The protein belongs to the PPP phosphatase family. PP-1 subfamily. Mn(2+) is required as a cofactor.

The enzyme catalyses O-phospho-L-seryl-[protein] + H2O = L-seryl-[protein] + phosphate. It catalyses the reaction O-phospho-L-threonyl-[protein] + H2O = L-threonyl-[protein] + phosphate. This chain is Putative serine/threonine-protein phosphatase C06A1.3, found in Caenorhabditis elegans.